The primary structure comprises 316 residues: tRNA-cytidine(32) 2-sulfurtransferase (316 aa).

The tract at residues M1 to R31 is disordered. Residues P10–P21 are compositionally biased toward low complexity. The short motif at S62–S67 is the PP-loop motif element. [4Fe-4S] cluster-binding residues include C137, C140, and C228.

The protein belongs to the TtcA family. As to quaternary structure, homodimer. Mg(2+) is required as a cofactor. The cofactor is [4Fe-4S] cluster.

The protein localises to the cytoplasm. It catalyses the reaction cytidine(32) in tRNA + S-sulfanyl-L-cysteinyl-[cysteine desulfurase] + AH2 + ATP = 2-thiocytidine(32) in tRNA + L-cysteinyl-[cysteine desulfurase] + A + AMP + diphosphate + H(+). Its pathway is tRNA modification. Functionally, catalyzes the ATP-dependent 2-thiolation of cytidine in position 32 of tRNA, to form 2-thiocytidine (s(2)C32). The sulfur atoms are provided by the cysteine/cysteine desulfurase (IscS) system. The chain is tRNA-cytidine(32) 2-sulfurtransferase from Verminephrobacter eiseniae (strain EF01-2).